The primary structure comprises 330 residues: Solute-binding protein NAS141_03721 (330 aa).

The signal sequence occupies residues 1–27 (MSFFTKTAQLVSGAAVAATLFTATAQA). Alpha-D-mannuronate-binding positions include Glu-75, Asn-97, Arg-153, Arg-173, Tyr-196, 213–214 (NE), and Arg-240. Residues Glu-75, Asn-97, Arg-153, Arg-173, Tyr-196, 213 to 214 (NE), and Arg-240 contribute to the alpha-D-taluronate site.

The protein belongs to the bacterial solute-binding protein 7 family. As to quaternary structure, the complex is comprised of an extracytoplasmic solute-binding protein and a heteromeric permease formed by two transmembrane proteins.

It localises to the periplasm. Its function is as follows. Solute-binding protein that binds D-mannuronate and D-taluronate (in vitro). Probably part of a tripartite ATP-independent periplasmic (TRAP) transport system that mediates solute transport into the cytoplasm. The polypeptide is Solute-binding protein NAS141_03721 (Sulfitobacter sp. (strain NAS-14.1)).